The following is a 117-amino-acid chain: Probable glycerol dehydratase-reactivating factor small subunit (117 aa).

Residue glutamate 31 coordinates Mg(2+).

Belongs to the DdrB/PduH family. As to quaternary structure, member of the GDR complex, probably composed of DhaF(2)/DhaG(2). It depends on Mg(2+) as a cofactor.

Small subunit of the glycerol dehydratase-reactivating factor (GDR), which reactivates suicidally inhibited adenosylcobalamin-dependent glycerol dehydratase. The protein is Probable glycerol dehydratase-reactivating factor small subunit of Citrobacter freundii.